The sequence spans 308 residues: MKRVWPRIPTISNVCRARSIYSAAQENAYRSSVKLIQEYSEKVHKKLQAKLLENPSETSPEIERLQVLSQINLPEVRSKFHKKEIDYTNPVFLYMLKQQWEDYQKLLLLQRLEQMKVIKDSGIGSFSPSVDVQLGFNPENNDSITPGTILPSTVTVKTPWLSVLPFNCKKNHYSVITLDLDVPNYETNRFETHCNWLLTNIPIEASKRVPIDTSKAFFQYRPPIVHRGEDKHRILTLVLRQKSSSISIPSNALVRERFDLSEFCSIYDLEPVGAHLWRSGWDSDAVALLSKHPSVHEYRDIRVERIPA.

The N-terminal 17 residues, 1–17 (MKRVWPRIPTISNVCRA), are a transit peptide targeting the mitochondrion.

The protein belongs to the phosphatidylethanolamine-binding protein family. Mitochondrion-specific ribosomal protein mL38 subfamily. As to quaternary structure, component of the mitochondrial large ribosomal subunit (mt-LSU). Mature yeast 74S mitochondrial ribosomes consist of a small (37S) and a large (54S) subunit. The 37S small subunit contains a 15S ribosomal RNA (15S mt-rRNA) and at least 32 different proteins. The 54S large subunit contains a 21S rRNA (21S mt-rRNA) and at least 45 different proteins.

The protein localises to the mitochondrion. Functionally, component of the mitochondrial ribosome (mitoribosome), a dedicated translation machinery responsible for the synthesis of mitochondrial genome-encoded proteins, including at least some of the essential transmembrane subunits of the mitochondrial respiratory chain. The mitoribosomes are attached to the mitochondrial inner membrane and translation products are cotranslationally integrated into the membrane. The sequence is that of Large ribosomal subunit protein mL38 (mrpl35) from Schizosaccharomyces pombe (strain 972 / ATCC 24843) (Fission yeast).